Consider the following 319-residue polypeptide: Ubiquinone biosynthesis protein COQ9, mitochondrial (319 aa).

The transit peptide at 1–45 (MAATVAFSGVLRRAGWRLLQLRCLPVPRCRPALAPRAFRASAMQL) directs the protein to the mitochondrion. The SIFI-degron signature appears at 17-32 (RLLQLRCLPVPRCRPA). The segment at 46-99 (RSLDQQKDQPPPSSSQQQSEAQGAEEPNPEALRSPPRYTDQGGEEEEDYESEEQ) is disordered. A compositionally biased stretch (acidic residues) spans 87-98 (GGEEEEDYESEE). An N6-acetyllysine modification is found at K176. A 1,2-diacylglycero-3-phosphoethanolamine is bound at residue R245.

The protein belongs to the COQ9 family. As to quaternary structure, homodimer. Heterodimer; two heterodimers of COQ7:COQ9 come together on the same side of the lipid pseudo-bilayer and form a curved tetramer with a hydrophobic surface suitable for membrane interaction. These two tetramers assemble into a soluble octamer with a pseudo-bilayer of lipids captured within. Interacts with COQ7; this interaction allows ubiquinone (CoQ) isoprene intermediates presentation to COQ7 and facilitates the COQ7-mediated hydroxylase step. In terms of processing, in response to mitochondrial stress, the precursor protein is ubiquitinated by the SIFI complex in the cytoplasm before mitochondrial import, leading to its degradation. Within the SIFI complex, UBR4 initiates ubiquitin chain that are further elongated or branched by KCMF1.

The protein resides in the mitochondrion. The protein operates within cofactor biosynthesis; ubiquinone biosynthesis. In terms of biological role, membrane-associated protein that warps the membrane surface to access and bind aromatic isoprenes with high specificity, including ubiquinone (CoQ) isoprene intermediates and presents them directly to COQ7, therefore facilitating the COQ7-mediated hydroxylase step. Participates in the biosynthesis of coenzyme Q, also named ubiquinone, an essential lipid-soluble electron transporter for aerobic cellular respiration. The sequence is that of Ubiquinone biosynthesis protein COQ9, mitochondrial from Bos taurus (Bovine).